The following is a 306-amino-acid chain: Tyrosine recombinase XerC (306 aa).

In terms of domain architecture, Core-binding (CB) spans 1–85 (MQQQLEQFLA…AIKSFFEYLQ (85 aa)). The Tyr recombinase domain occupies 106-289 (FLPKAITVAQ…SNDRAVKYDQ (184 aa)). Residues Arg147, Lys171, His241, Arg244, and His267 contribute to the active site. The active-site O-(3'-phospho-DNA)-tyrosine intermediate is the Tyr276.

The protein belongs to the 'phage' integrase family. XerC subfamily. As to quaternary structure, forms a cyclic heterotetrameric complex composed of two molecules of XerC and two molecules of XerD.

It localises to the cytoplasm. Functionally, site-specific tyrosine recombinase, which acts by catalyzing the cutting and rejoining of the recombining DNA molecules. The XerC-XerD complex is essential to convert dimers of the bacterial chromosome into monomers to permit their segregation at cell division. It also contributes to the segregational stability of plasmids. The chain is Tyrosine recombinase XerC from Herpetosiphon aurantiacus (strain ATCC 23779 / DSM 785 / 114-95).